The primary structure comprises 509 residues: Acetyl-coenzyme A carboxylase carboxyl transferase subunit beta, chloroplastic (509 aa).

Positions 164–216 are disordered; sequence HGSVCDGESHNSSEGESSSRRTHTKGVDLTIRESSNENERESSNENERKSSND. Composition is skewed to basic and acidic residues over residues 170–182 and 193–216; these read GESH…ESSS and TIRE…SSND. The CoA carboxyltransferase N-terminal domain occupies 226–509; sequence LWLQCENCYG…LNQNSNQVEC (284 aa). C230, C233, C249, and C252 together coordinate Zn(2+). A C4-type zinc finger spans residues 230-252; it reads CENCYGLNYKKFLKSKMNICEQC. Residues 288–307 are disordered; sequence FDSEGEQEQEQEQEQEEEET.

This sequence belongs to the AccD/PCCB family. As to quaternary structure, acetyl-CoA carboxylase is a heterohexamer composed of biotin carboxyl carrier protein, biotin carboxylase and 2 subunits each of ACCase subunit alpha and ACCase plastid-coded subunit beta (accD). It depends on Zn(2+) as a cofactor.

Its subcellular location is the plastid. It is found in the chloroplast stroma. The enzyme catalyses N(6)-carboxybiotinyl-L-lysyl-[protein] + acetyl-CoA = N(6)-biotinyl-L-lysyl-[protein] + malonyl-CoA. It functions in the pathway lipid metabolism; malonyl-CoA biosynthesis; malonyl-CoA from acetyl-CoA: step 1/1. In terms of biological role, component of the acetyl coenzyme A carboxylase (ACC) complex. Biotin carboxylase (BC) catalyzes the carboxylation of biotin on its carrier protein (BCCP) and then the CO(2) group is transferred by the transcarboxylase to acetyl-CoA to form malonyl-CoA. The chain is Acetyl-coenzyme A carboxylase carboxyl transferase subunit beta, chloroplastic from Ipomoea purpurea (Common morning glory).